Reading from the N-terminus, the 201-residue chain is Probable nicotinate-nucleotide adenylyltransferase (201 aa).

This sequence belongs to the NadD family.

The enzyme catalyses nicotinate beta-D-ribonucleotide + ATP + H(+) = deamido-NAD(+) + diphosphate. It participates in cofactor biosynthesis; NAD(+) biosynthesis; deamido-NAD(+) from nicotinate D-ribonucleotide: step 1/1. In terms of biological role, catalyzes the reversible adenylation of nicotinate mononucleotide (NaMN) to nicotinic acid adenine dinucleotide (NaAD). This chain is Probable nicotinate-nucleotide adenylyltransferase, found in Neisseria meningitidis serogroup C / serotype 2a (strain ATCC 700532 / DSM 15464 / FAM18).